The following is a 30-amino-acid chain: Proteinase inhibitor CeKI (30 aa).

Belongs to the protease inhibitor I3 (leguminous Kunitz-type inhibitor) family.

Potent inhibitor of serine proteases plasma kallikrein, plasmin and coagulation factor XIIa. Weak inhibitor of serine proteases trypsin and coagulation factor Xa. Does not inhibit the serine proteases chymotrypsin, elastase or thrombin. Inhibits kinin release from HMW-kininogen by kallikrein in vitro. This chain is Proteinase inhibitor CeKI, found in Paubrasilia echinata (Pau Brasil).